Reading from the N-terminus, the 118-residue chain is DNA-binding protein inhibitor ID-3-B (118 aa).

In terms of domain architecture, bHLH spans 32–84 (SLKGAGIDETMGLLYDMNGCYSKLKELVPGIPQGSKLSQVEILQHVIDYIFDL).

Homodimer. Heterodimer with other HLH proteins. Interacts (via HLH domain) with the bHLH protein hes4/hairy2 (via Orange domain). Interacts with stat3.

Its subcellular location is the nucleus. Its function is as follows. Transcriptional regulator (lacking a basic DNA binding domain) which negatively regulates the basic helix-loop-helix (bHLH) transcription factors by forming heterodimers and inhibiting their DNA binding and transcriptional activity. Influences cell fate decisions in the embryo by sequestering and blocking the activity of the bHLH transcription factors that control these decisions. Inhibits the binding of myogenic bHLH-containing complexes to E-box DNA, thereby preventing activation of muscle-specific target genes. Also inhibits the activity of neurogenic factor neurod1/neuroD. Plays a role in cell cycle progression and survival of neural crest progenitors; binding to either hes4-B/hairy2b or stat3 blocks the formation of transcription factor complexes and the repressor function of hes4-B/hairy2B, to allow neural crest progenitors to differentiate. May play a role in the regulation of the circadian rhythm. The polypeptide is DNA-binding protein inhibitor ID-3-B (id3-b) (Xenopus laevis (African clawed frog)).